Here is a 79-residue protein sequence, read N- to C-terminus: Cytochrome b (79 aa).

Helical transmembrane passes span 1 to 7 (TALLLAA), 31 to 52 (WLIR…YLHI), and 67 to 79 (WNIG…TLMA). Residues histidine 37 and histidine 51 each coordinate heme b.

The protein belongs to the cytochrome b family. In terms of assembly, the cytochrome bc1 complex contains 11 subunits: 3 respiratory subunits (MT-CYB, CYC1 and UQCRFS1), 2 core proteins (UQCRC1 and UQCRC2) and 6 low-molecular weight proteins (UQCRH/QCR6, UQCRB/QCR7, UQCRQ/QCR8, UQCR10/QCR9, UQCR11/QCR10 and a cleavage product of UQCRFS1). This cytochrome bc1 complex then forms a dimer. Requires heme b as cofactor.

The protein resides in the mitochondrion inner membrane. In terms of biological role, component of the ubiquinol-cytochrome c reductase complex (complex III or cytochrome b-c1 complex) that is part of the mitochondrial respiratory chain. The b-c1 complex mediates electron transfer from ubiquinol to cytochrome c. Contributes to the generation of a proton gradient across the mitochondrial membrane that is then used for ATP synthesis. The polypeptide is Cytochrome b (MT-CYB) (Pomatostomus superciliosus (White-browed babbler)).